We begin with the raw amino-acid sequence, 371 residues long: Transcription termination/antitermination protein NusA (371 aa).

An S1 motif domain is found at 135-199; it reads EDIMTGIVQR…KGPQIYVSRT (65 aa). The 67-residue stretch at 301–367 folds into the KH domain; it reads EKATTVIVPD…EPLFTEPETA (67 aa). The tract at residues 347 to 371 is disordered; sequence GIYPRELEEDDEPLFTEPETAESDE. Residues 353–371 are compositionally biased toward acidic residues; that stretch reads LEEDDEPLFTEPETAESDE.

This sequence belongs to the NusA family. As to quaternary structure, monomer. Binds directly to the core enzyme of the DNA-dependent RNA polymerase and to nascent RNA.

The protein resides in the cytoplasm. In terms of biological role, participates in both transcription termination and antitermination. In Bacillus subtilis (strain 168), this protein is Transcription termination/antitermination protein NusA.